We begin with the raw amino-acid sequence, 422 residues long: MKLIVSRSQISGCVHAPPSKSHTHRAFLLASLAKGESVVLSPLLGEDTLATLSAVKALGANVCEGDDRITIQGGNLHAPLPKGTVINCKNSGTSIRMLAGIASRLDGTTEFTGDASLCSRPMKPLLDALSELGAGVTSDNGCAPFTITGPVSGGDVHIRGDVSSQFISGLLISAPLGKADTRIHLTTPLTSKPYVDMTISAMKKHGVSVETIEDGYLVRSGQVYSSEDVQVGGDYSSAAFLFAAAALAGEIAVSGLDPADPQGDQVVISILETFGAGVVRDGENVTIRKAALKAADIDLANAPDLFPIIAVLASQAKGTSRLYGAAHLRFKESDRIMSTVLFLRSMGADISETEDGCIVTGPANLSGANVTTFGDHRIMMASAVAGLIADSTTTVDDAGCCAVSYPGFVKDMQKLGADMREE.

The 3-phosphoshikimate site is built by lysine 20, serine 21, and arginine 25. Lysine 20 provides a ligand contact to phosphoenolpyruvate. Positions 92 and 120 each coordinate phosphoenolpyruvate. Residues serine 163, serine 164, glutamine 165, serine 191, aspartate 304, and lysine 331 each contribute to the 3-phosphoshikimate site. Glutamine 165 provides a ligand contact to phosphoenolpyruvate. Aspartate 304 acts as the Proton acceptor in catalysis. Phosphoenolpyruvate is bound by residues arginine 335 and arginine 377.

It belongs to the EPSP synthase family. In terms of assembly, monomer.

It is found in the cytoplasm. The enzyme catalyses 3-phosphoshikimate + phosphoenolpyruvate = 5-O-(1-carboxyvinyl)-3-phosphoshikimate + phosphate. It participates in metabolic intermediate biosynthesis; chorismate biosynthesis. Catalyzes the transfer of the enolpyruvyl moiety of phosphoenolpyruvate (PEP) to the 5-hydroxyl of shikimate-3-phosphate (S3P) to produce enolpyruvyl shikimate-3-phosphate and inorganic phosphate. In Methanocorpusculum labreanum (strain ATCC 43576 / DSM 4855 / Z), this protein is 3-phosphoshikimate 1-carboxyvinyltransferase.